We begin with the raw amino-acid sequence, 67 residues long: Andropin (67 aa).

The N-terminal stretch at 1 to 19 (MKYFLVLVVLTLILAISVG) is a signal peptide.

It belongs to the andropin family. In terms of tissue distribution, ejaculatory duct of adult males.

It localises to the secreted. Its function is as follows. Male-specific peptide with moderate activity against Gram-positive bacteria. The sequence is that of Andropin (Anp) from Drosophila orena (Fruit fly).